The sequence spans 367 residues: Undecaprenyl-phosphate alpha-N-acetylglucosaminyl 1-phosphate transferase (367 aa).

10 helical membrane-spanning segments follow: residues 3–23 (LLTVSTDLISIFLFTTLFLFF), 46–66 (LIPLVGGISVYAGICFTFGIV), 69–89 (YIPHASLYLACAGVLVFIGAL), 132–152 (VLGPFGYFLTLFAVWAAINAF), 158–178 (IDGLLGGLSCVSFAAIGMILW), 187–207 (IWCFAMIAAILPYIMLNLGIL), 213–233 (VFMGDAGSTLIGFTVIWILLE), 242–262 (ISPVTALWIIAIPLMDMVAIM), 294–314 (AFVLITLAAALLASIGVLAEY), and 318–338 (VPEWVMLVLFLLAFFLYGYCI).

It belongs to the glycosyltransferase 4 family. WecA subfamily. Mg(2+) serves as cofactor. It depends on Mn(2+) as a cofactor.

Its subcellular location is the cell inner membrane. The enzyme catalyses di-trans,octa-cis-undecaprenyl phosphate + UDP-N-acetyl-alpha-D-glucosamine = N-acetyl-alpha-D-glucosaminyl-di-trans,octa-cis-undecaprenyl diphosphate + UMP. Its pathway is bacterial outer membrane biogenesis; LPS O-antigen biosynthesis. It participates in bacterial outer membrane biogenesis; enterobacterial common antigen biosynthesis. Functionally, catalyzes the transfer of the GlcNAc-1-phosphate moiety from UDP-GlcNAc onto the carrier lipid undecaprenyl phosphate (C55-P), yielding GlcNAc-pyrophosphoryl-undecaprenyl (GlcNAc-PP-C55). This Escherichia coli O6:H1 (strain CFT073 / ATCC 700928 / UPEC) protein is Undecaprenyl-phosphate alpha-N-acetylglucosaminyl 1-phosphate transferase.